The chain runs to 688 residues: Glycine--tRNA ligase beta subunit (688 aa).

Belongs to the class-II aminoacyl-tRNA synthetase family. In terms of assembly, tetramer of two alpha and two beta subunits.

The protein resides in the cytoplasm. The enzyme catalyses tRNA(Gly) + glycine + ATP = glycyl-tRNA(Gly) + AMP + diphosphate. The protein is Glycine--tRNA ligase beta subunit of Shewanella oneidensis (strain ATCC 700550 / JCM 31522 / CIP 106686 / LMG 19005 / NCIMB 14063 / MR-1).